We begin with the raw amino-acid sequence, 159 residues long: Ribosome maturation factor RimP (159 aa).

This sequence belongs to the RimP family.

Its subcellular location is the cytoplasm. In terms of biological role, required for maturation of 30S ribosomal subunits. The sequence is that of Ribosome maturation factor RimP from Lacticaseibacillus casei (strain BL23) (Lactobacillus casei).